The chain runs to 408 residues: UPF0754 membrane protein Tery_3973 (408 aa).

Transmembrane regions (helical) follow at residues 4-24 (IWLY…TNDI) and 385-405 (IVNL…ILLV).

Belongs to the UPF0754 family.

It localises to the cell inner membrane. The polypeptide is UPF0754 membrane protein Tery_3973 (Trichodesmium erythraeum (strain IMS101)).